Here is a 291-residue protein sequence, read N- to C-terminus: Phosphatidylserine decarboxylase proenzyme (291 aa).

Catalysis depends on charge relay system; for autoendoproteolytic cleavage activity residues Asp-93, His-150, and Ser-253. The active-site Schiff-base intermediate with substrate; via pyruvic acid; for decarboxylase activity is Ser-253. At Ser-253 the chain carries Pyruvic acid (Ser); by autocatalysis.

It belongs to the phosphatidylserine decarboxylase family. PSD-B subfamily. Prokaryotic type I sub-subfamily. In terms of assembly, heterodimer of a large membrane-associated beta subunit and a small pyruvoyl-containing alpha subunit. Requires pyruvate as cofactor. Is synthesized initially as an inactive proenzyme. Formation of the active enzyme involves a self-maturation process in which the active site pyruvoyl group is generated from an internal serine residue via an autocatalytic post-translational modification. Two non-identical subunits are generated from the proenzyme in this reaction, and the pyruvate is formed at the N-terminus of the alpha chain, which is derived from the carboxyl end of the proenzyme. The autoendoproteolytic cleavage occurs by a canonical serine protease mechanism, in which the side chain hydroxyl group of the serine supplies its oxygen atom to form the C-terminus of the beta chain, while the remainder of the serine residue undergoes an oxidative deamination to produce ammonia and the pyruvoyl prosthetic group on the alpha chain. During this reaction, the Ser that is part of the protease active site of the proenzyme becomes the pyruvoyl prosthetic group, which constitutes an essential element of the active site of the mature decarboxylase.

It is found in the cell membrane. It catalyses the reaction a 1,2-diacyl-sn-glycero-3-phospho-L-serine + H(+) = a 1,2-diacyl-sn-glycero-3-phosphoethanolamine + CO2. It functions in the pathway phospholipid metabolism; phosphatidylethanolamine biosynthesis; phosphatidylethanolamine from CDP-diacylglycerol: step 2/2. Catalyzes the formation of phosphatidylethanolamine (PtdEtn) from phosphatidylserine (PtdSer). This chain is Phosphatidylserine decarboxylase proenzyme, found in Alcanivorax borkumensis (strain ATCC 700651 / DSM 11573 / NCIMB 13689 / SK2).